The chain runs to 227 residues: Orotate phosphoribosyltransferase 2 (227 aa).

41–42 lines the orotate pocket; the sequence is FF. 5-phospho-alpha-D-ribose 1-diphosphate is bound by residues 79–80, R109, K110, K113, H115, and 135–143; these read YK and DDVMTAGTA. Residues T139 and R167 each contribute to the orotate site.

This sequence belongs to the purine/pyrimidine phosphoribosyltransferase family. PyrE subfamily. In terms of assembly, homodimer.

The enzyme catalyses orotidine 5'-phosphate + diphosphate = orotate + 5-phospho-alpha-D-ribose 1-diphosphate. It functions in the pathway pyrimidine metabolism; UMP biosynthesis via de novo pathway; UMP from orotate: step 1/2. Catalyzes the transfer of a ribosyl phosphate group from 5-phosphoribose 1-diphosphate to orotate, leading to the formation of orotidine monophosphate (OMP). In Saccharomyces cerevisiae (strain ATCC 204508 / S288c) (Baker's yeast), this protein is Orotate phosphoribosyltransferase 2 (URA10).